We begin with the raw amino-acid sequence, 208 residues long: Large ribosomal subunit protein bL25 (208 aa).

Belongs to the bacterial ribosomal protein bL25 family. CTC subfamily. As to quaternary structure, part of the 50S ribosomal subunit; part of the 5S rRNA/L5/L18/L25 subcomplex. Contacts the 5S rRNA. Binds to the 5S rRNA independently of L5 and L18.

In terms of biological role, this is one of the proteins that binds to the 5S RNA in the ribosome where it forms part of the central protuberance. The protein is Large ribosomal subunit protein bL25 of Bartonella quintana (strain Toulouse) (Rochalimaea quintana).